Consider the following 167-residue polypeptide: Telethonin (167 aa).

Residue Ser-39 is modified to Phosphoserine. The segment at 142 to 167 is disordered; sequence PVVPVSKPGPLRRTLSRSMSQEAQRG. Polar residues predominate over residues 157-167; the sequence is SRSMSQEAQRG.

Interacts with MYOZ1, MYOZ2 and MYOZ3. Interacts with CSRP3. Interacts directly with the N-terminal Ig-like domains of 2 titin (TTN) molecules. Interacts with ANKRD2; the interaction is direct.

It localises to the cytoplasm. Its subcellular location is the myofibril. It is found in the sarcomere. Its function is as follows. Muscle assembly regulating factor. Mediates the antiparallel assembly of titin (TTN) molecules at the sarcomeric Z-disk. In Mus musculus (Mouse), this protein is Telethonin (Tcap).